The primary structure comprises 598 residues: Aspartate--tRNA(Asp/Asn) ligase (598 aa).

Glu177 is an L-aspartate binding site. The segment at 201–204 is aspartate; it reads QLFK. Arg223 contacts L-aspartate. Residues 223 to 225 and Gln232 contribute to the ATP site; that span reads RDE. Position 456 (His456) interacts with L-aspartate. Residue Glu493 participates in ATP binding. L-aspartate is bound at residue Arg500. 545 to 548 is an ATP binding site; the sequence is GLDR.

The protein belongs to the class-II aminoacyl-tRNA synthetase family. Type 1 subfamily. In terms of assembly, homodimer.

The protein localises to the cytoplasm. The catalysed reaction is tRNA(Asx) + L-aspartate + ATP = L-aspartyl-tRNA(Asx) + AMP + diphosphate. Functionally, aspartyl-tRNA synthetase with relaxed tRNA specificity since it is able to aspartylate not only its cognate tRNA(Asp) but also tRNA(Asn). Reaction proceeds in two steps: L-aspartate is first activated by ATP to form Asp-AMP and then transferred to the acceptor end of tRNA(Asp/Asn). The protein is Aspartate--tRNA(Asp/Asn) ligase of Prochlorococcus marinus (strain AS9601).